Consider the following 478-residue polypeptide: Trigger factor (478 aa).

The span at Met154 to Gly167 shows a compositional bias: basic and acidic residues. 2 disordered regions span residues Met154–Gly173 and Lys441–Gly478. Residues Gly173–Thr258 form the PPIase FKBP-type domain.

This sequence belongs to the FKBP-type PPIase family. Tig subfamily.

Its subcellular location is the cytoplasm. It carries out the reaction [protein]-peptidylproline (omega=180) = [protein]-peptidylproline (omega=0). Its function is as follows. Involved in protein export. Acts as a chaperone by maintaining the newly synthesized protein in an open conformation. Functions as a peptidyl-prolyl cis-trans isomerase. The polypeptide is Trigger factor (Methylorubrum extorquens (strain CM4 / NCIMB 13688) (Methylobacterium extorquens)).